The sequence spans 245 residues: Type III pantothenate kinase (245 aa).

6–13 (DVGNTAMK) contacts ATP. Substrate is bound by residues Y93 and 100–103 (GVDR). Residue D102 is the Proton acceptor of the active site. D121 is a binding site for K(+). S124 serves as a coordination point for ATP. T175 contacts substrate.

The protein belongs to the type III pantothenate kinase family. As to quaternary structure, homodimer. NH4(+) is required as a cofactor. K(+) serves as cofactor.

It localises to the cytoplasm. It carries out the reaction (R)-pantothenate + ATP = (R)-4'-phosphopantothenate + ADP + H(+). It functions in the pathway cofactor biosynthesis; coenzyme A biosynthesis; CoA from (R)-pantothenate: step 1/5. Functionally, catalyzes the phosphorylation of pantothenate (Pan), the first step in CoA biosynthesis. In Alcanivorax borkumensis (strain ATCC 700651 / DSM 11573 / NCIMB 13689 / SK2), this protein is Type III pantothenate kinase.